The sequence spans 373 residues: Molybdenum import ATP-binding protein ModC (373 aa).

Residues 4 to 240 (LTPPTIRAAF…PKLPLAIARD (237 aa)) enclose the ABC transporter domain. ATP is bound at residue 38-45 (GPSGCGKS). Residues 299 to 369 (ASSILNAIAA…IKGVALAPGR (71 aa)) enclose the Mop domain.

The protein belongs to the ABC transporter superfamily. Molybdate importer (TC 3.A.1.8) family. In terms of assembly, the complex is composed of two ATP-binding proteins (ModC), two transmembrane proteins (ModB) and a solute-binding protein (ModA).

It localises to the cell inner membrane. The catalysed reaction is molybdate(out) + ATP + H2O = molybdate(in) + ADP + phosphate + H(+). In terms of biological role, part of the ABC transporter complex ModABC involved in molybdenum import. Responsible for energy coupling to the transport system. This chain is Molybdenum import ATP-binding protein ModC, found in Rhodopseudomonas palustris (strain ATCC BAA-98 / CGA009).